The sequence spans 39 residues: Fuctinin-3 (39 aa).

A disordered region spans residues 1–39; the sequence is KELNSNHDGADETSEKEQQEAIEHIDEVQNEIDRLNETA.

The protein to human SET/PHAPII protein. Oligomer.

It is found in the cytoplasm. In terms of biological role, has a role in the physiological regulation of fucosylation processes. The sequence is that of Fuctinin-3 from Rattus norvegicus (Rat).